We begin with the raw amino-acid sequence, 280 residues long: Phosphate import ATP-binding protein PstB (280 aa).

The ABC transporter domain occupies 34 to 275 (IEVKNLNFFY…PARKETEDYI (242 aa)). 66–73 (GPSGCGKS) provides a ligand contact to ATP.

The protein belongs to the ABC transporter superfamily. Phosphate importer (TC 3.A.1.7) family. As to quaternary structure, the complex is composed of two ATP-binding proteins (PstB), two transmembrane proteins (PstC and PstA) and a solute-binding protein (PstS).

Its subcellular location is the cell inner membrane. It carries out the reaction phosphate(out) + ATP + H2O = ADP + 2 phosphate(in) + H(+). Functionally, part of the ABC transporter complex PstSACB involved in phosphate import. Responsible for energy coupling to the transport system. The sequence is that of Phosphate import ATP-binding protein PstB from Burkholderia mallei (strain ATCC 23344).